The chain runs to 471 residues: 3-isopropylmalate dehydratase large subunit (471 aa).

The [4Fe-4S] cluster site is built by cysteine 347, cysteine 407, and cysteine 410.

It belongs to the aconitase/IPM isomerase family. LeuC type 1 subfamily. In terms of assembly, heterodimer of LeuC and LeuD. Requires [4Fe-4S] cluster as cofactor.

It catalyses the reaction (2R,3S)-3-isopropylmalate = (2S)-2-isopropylmalate. It participates in amino-acid biosynthesis; L-leucine biosynthesis; L-leucine from 3-methyl-2-oxobutanoate: step 2/4. Catalyzes the isomerization between 2-isopropylmalate and 3-isopropylmalate, via the formation of 2-isopropylmaleate. The polypeptide is 3-isopropylmalate dehydratase large subunit (Buchnera aphidicola subsp. Baizongia pistaciae (strain Bp)).